A 777-amino-acid chain; its full sequence is Mediator of RNA polymerase II transcription subunit 15 (777 aa).

Disordered stretches follow at residues 120 to 139 and 418 to 520; these read MNLPGQPQPGASGMAPHGIT and SIPV…EEQQ. Residues 420–434 are compositionally biased toward low complexity; sequence PVMSSPSPVQQVQTP. The segment covering 435 to 448 has biased composition (pro residues); that stretch reads QPMPPPPQPSPQPS. The segment covering 449–471 has biased composition (low complexity); that stretch reads QPMSQPNSNVSSGPAPSPSSFMP. Residues 500–519 show a composition bias toward polar residues; the sequence is TPGNPNSVMSPASNNQSEEQ.

This sequence belongs to the Mediator complex subunit 15 family. As to quaternary structure, component of the Mediator complex. Interacts with srebf1 and srebf2. Interacts with smad2, smad3 and smad4.

It localises to the cytoplasm. The protein localises to the nucleus. In terms of biological role, component of the Mediator complex, a coactivator involved in the regulated transcription of nearly all RNA polymerase II-dependent genes. Mediator functions as a bridge to convey information from gene-specific regulatory proteins to the basal RNA polymerase II transcription machinery. Mediator is recruited to promoters by direct interactions with regulatory proteins and serves as a scaffold for the assembly of a functional preinitiation complex with RNA polymerase II and the general transcription factors. Required for cholesterol-dependent gene regulation. Positively regulates the Nodal signaling pathway. This Xenopus laevis (African clawed frog) protein is Mediator of RNA polymerase II transcription subunit 15 (med15).